We begin with the raw amino-acid sequence, 764 residues long: MAATLKSLKLVRYRAFCSPSAFGAVRSVSYWNVSSTQHGGQDPPEHISLCHSAKKVKNICSTFSSRRILTTSSAHPGLEFSKTSSSKASTLQLGSPRATGVDEEDVEVFDSFENMRVFLQLRPEYRVHSYNASETSQLLSVSEGELILHKVRVNQNNLQAQVIVDYLCKLSSLPAEQHPVLLGSTSFALLCQLSVKKIQLFDTQDLINVLKAFVILGIPHSHSMLDVYETKCCHQVWEMNMDQLLLVADLWRYLGRKVPRFLNIFSSYLNLHWKDLSLSQLVHLIYVIGENRQVSQDLMQKLESLILKYIDLINLEEVGTICLGFFKSSTNLSEFVMRKIGDLACANIQHLSSRSLVNIVKMFRFTHVDHINFMKQIGEIAPQRIPSLGVQGVMHLTLYCSALRFLNEGVMNAVAASLPPRVAHCRSKDVAKILWSFGTLNYKPPNAEEFYSSLISEIHRKMPEFNQYPEHLPTCLLGLAFLEYFPVELIDFALSPGFVRLAQERTKFDLLKELYTLDGTVGIECPDYRGNRLSTHLQQEGSELLWYLAEKDMNSKPEFLETVFLLETMLGGPQYVKHHMILPHTRSSDLEVQLDVNLKPLPFNREATPAENVAKLRLEHVGVSLTDDLMNKLLKGKARGHFQGKTESEPGQQPMELENKAAVPLGGFLCNVADKSGAMEMAGLCPAACMQTPRMKLAVQFTNRNQYCYGSRDLLGLHNMKRRQLARLGYRVVELSYWEWLPLLKRTRLEKLAFLHEKVFTSAL.

Residues 1 to 27 (MAATLKSLKLVRYRAFCSPSAFGAVRS) constitute a mitochondrion transit peptide. Serine 95 is subject to Phosphoserine. N6-acetyllysine is present on lysine 507. One can recognise an RAP domain in the interval 697 to 757 (LAVQFTNRNQ…RLEKLAFLHE (61 aa)).

This sequence belongs to the FAST kinase family. In terms of assembly, found in a complex with GRSF1, DDX28, DHX30 and FASTKD2. Associates with the 12S mitochondrial rRNA (12S mt-rRNA). Expression detected in spleen, thymus, testis, ovary, colon, heart, smooth muscle, kidney, brain, lung, liver and white adipose tissue with highest expression in heart, smooth muscle, liver and thyroid.

The protein localises to the mitochondrion matrix. Its subcellular location is the mitochondrion nucleoid. Functionally, plays an important role in the processing of non-canonical mitochondrial mRNA precursors. This chain is FAST kinase domain-containing protein 5, mitochondrial (FASTKD5), found in Homo sapiens (Human).